We begin with the raw amino-acid sequence, 715 residues long: Poly(A) polymerase alpha-A (715 aa).

ATP contacts are provided by residues 82-84 (FGP), threonine 91, 95-97 (DID), aspartate 149, lysine 210, tyrosine 219, and 228-229 (GV). Aspartate 95, aspartate 97, and aspartate 149 together coordinate Mg(2+). Positions 472 to 489 (RKQLHQLQPSHVSPKKKK) match the Nuclear localization signal 1 motif. Disordered regions lie at residues 510–543 (DSDN…PAAP), 560–590 (QNNS…TPKP), and 607–693 (KPVS…DLSD). Polar residues-rich tracts occupy residues 515–539 (MSVP…QGNS) and 560–588 (QNNS…SSTP). A Nuclear localization signal 2 motif is present at residues 624–639 (KRTSSPSNEDSPKKNK). A compositionally biased stretch (basic and acidic residues) spans 655-673 (DQNKLETEELKEVHSEEKS). Residues 674-692 (SSPVPGSLPFSQQSSTDLS) are compositionally biased toward polar residues.

It belongs to the poly(A) polymerase family. As to quaternary structure, monomer. Mg(2+) is required as a cofactor. It depends on Mn(2+) as a cofactor.

It is found in the nucleus. The catalysed reaction is RNA(n) + ATP = RNA(n)-3'-adenine ribonucleotide + diphosphate. Polymerase that creates the 3'-poly(A) tail of mRNA's. May acquire specificity through interaction with a cleavage and polyadenylation factor (CPSF). The sequence is that of Poly(A) polymerase alpha-A (papola-a) from Xenopus laevis (African clawed frog).